Reading from the N-terminus, the 134-residue chain is Methylglyoxal synthase (134 aa).

The 134-residue stretch at 1–134 folds into the MGS-like domain; it reads MNIALIAHDN…DWRERVKERG (134 aa). Residues H8, K12, 34–37, and 54–55 each bind substrate; these read TGTT and SG. D60 functions as the Proton donor/acceptor in the catalytic mechanism. H87 is a binding site for substrate.

It belongs to the methylglyoxal synthase family.

The enzyme catalyses dihydroxyacetone phosphate = methylglyoxal + phosphate. Catalyzes the formation of methylglyoxal from dihydroxyacetone phosphate. This chain is Methylglyoxal synthase, found in Alkaliphilus metalliredigens (strain QYMF).